The primary structure comprises 430 residues: tRNA(Ile)-lysidine synthase (430 aa).

24-29 provides a ligand contact to ATP; it reads SGGLDS.

The protein belongs to the tRNA(Ile)-lysidine synthase family.

The protein localises to the cytoplasm. It catalyses the reaction cytidine(34) in tRNA(Ile2) + L-lysine + ATP = lysidine(34) in tRNA(Ile2) + AMP + diphosphate + H(+). In terms of biological role, ligates lysine onto the cytidine present at position 34 of the AUA codon-specific tRNA(Ile) that contains the anticodon CAU, in an ATP-dependent manner. Cytidine is converted to lysidine, thus changing the amino acid specificity of the tRNA from methionine to isoleucine. The protein is tRNA(Ile)-lysidine synthase of Haemophilus influenzae (strain 86-028NP).